The primary structure comprises 1527 residues: DNA-directed RNA polymerase subunit beta'' (1527 aa).

The Zn(2+) site is built by Cys-220, Cys-296, Cys-303, and Cys-306. 2 stretches are compositionally biased toward basic and acidic residues: residues 644 to 661 and 671 to 681; these read RTQE…RTRE and PENKYRTREGE. Disordered regions lie at residues 644 to 681 and 712 to 793; these read RTQE…REGE and YRTL…KKEG. Acidic residues-rich tracts occupy residues 737–755 and 763–786; these read GEYE…SSED and TLEE…PEED.

Belongs to the RNA polymerase beta' chain family. RpoC2 subfamily. As to quaternary structure, in plastids the minimal PEP RNA polymerase catalytic core is composed of four subunits: alpha, beta, beta', and beta''. When a (nuclear-encoded) sigma factor is associated with the core the holoenzyme is formed, which can initiate transcription. Requires Zn(2+) as cofactor.

It is found in the plastid. The protein localises to the chloroplast. It catalyses the reaction RNA(n) + a ribonucleoside 5'-triphosphate = RNA(n+1) + diphosphate. Functionally, DNA-dependent RNA polymerase catalyzes the transcription of DNA into RNA using the four ribonucleoside triphosphates as substrates. This is DNA-directed RNA polymerase subunit beta'' from Zea mays (Maize).